The following is a 210-amino-acid chain: MIDKESLKKCLKLYLVTDSEMLKGRDFYKCLEDAISSGITTVQLREKNASGREFLRKAMKLREITKRYGVKFIINDRVDIALICDADGVHVGQSDIDVREVRKLIGNNKILGVSARTLEEAICAKNDGADYLGVGSIFTTSTKLDAKSASFETVKEIKEKVDMPFVLIGGINLDNIDKLKCLESDGYAIISAILKAEDISKEVEKWTLKI.

4-amino-2-methyl-5-(diphosphooxymethyl)pyrimidine-binding positions include 43–47 and N75; that span reads QLREK. 2 residues coordinate Mg(2+): D76 and D95. 4-amino-2-methyl-5-(diphosphooxymethyl)pyrimidine is bound at residue S114. Residue 140–142 participates in 2-[(2R,5Z)-2-carboxy-4-methylthiazol-5(2H)-ylidene]ethyl phosphate binding; sequence TST. 4-amino-2-methyl-5-(diphosphooxymethyl)pyrimidine is bound at residue K143. Residues G170 and 190–191 each bind 2-[(2R,5Z)-2-carboxy-4-methylthiazol-5(2H)-ylidene]ethyl phosphate; that span reads IS.

Belongs to the thiamine-phosphate synthase family. Mg(2+) serves as cofactor.

The catalysed reaction is 2-[(2R,5Z)-2-carboxy-4-methylthiazol-5(2H)-ylidene]ethyl phosphate + 4-amino-2-methyl-5-(diphosphooxymethyl)pyrimidine + 2 H(+) = thiamine phosphate + CO2 + diphosphate. It catalyses the reaction 2-(2-carboxy-4-methylthiazol-5-yl)ethyl phosphate + 4-amino-2-methyl-5-(diphosphooxymethyl)pyrimidine + 2 H(+) = thiamine phosphate + CO2 + diphosphate. The enzyme catalyses 4-methyl-5-(2-phosphooxyethyl)-thiazole + 4-amino-2-methyl-5-(diphosphooxymethyl)pyrimidine + H(+) = thiamine phosphate + diphosphate. It functions in the pathway cofactor biosynthesis; thiamine diphosphate biosynthesis; thiamine phosphate from 4-amino-2-methyl-5-diphosphomethylpyrimidine and 4-methyl-5-(2-phosphoethyl)-thiazole: step 1/1. Functionally, condenses 4-methyl-5-(beta-hydroxyethyl)thiazole monophosphate (THZ-P) and 2-methyl-4-amino-5-hydroxymethyl pyrimidine pyrophosphate (HMP-PP) to form thiamine monophosphate (TMP). The polypeptide is Thiamine-phosphate synthase (Clostridioides difficile (strain 630) (Peptoclostridium difficile)).